We begin with the raw amino-acid sequence, 438 residues long: Aspartate--tRNA(Asp/Asn) ligase (438 aa).

Residue glutamate 176 coordinates L-aspartate. Residues 198-201 (QLYK) are aspartate. Residue arginine 220 coordinates L-aspartate. ATP is bound by residues 220-222 (RAE), 228-230 (RHL), and glutamate 361. The Mg(2+) site is built by glutamate 361 and serine 364. Residues serine 364 and arginine 368 each coordinate L-aspartate. 409–412 (GADR) contributes to the ATP binding site.

This sequence belongs to the class-II aminoacyl-tRNA synthetase family. Type 2 subfamily. In terms of assembly, homodimer. Requires Mg(2+) as cofactor.

Its subcellular location is the cytoplasm. It carries out the reaction tRNA(Asx) + L-aspartate + ATP = L-aspartyl-tRNA(Asx) + AMP + diphosphate. In terms of biological role, aspartyl-tRNA synthetase with relaxed tRNA specificity since it is able to aspartylate not only its cognate tRNA(Asp) but also tRNA(Asn). Reaction proceeds in two steps: L-aspartate is first activated by ATP to form Asp-AMP and then transferred to the acceptor end of tRNA(Asp/Asn). The chain is Aspartate--tRNA(Asp/Asn) ligase from Methanococcus vannielii (strain ATCC 35089 / DSM 1224 / JCM 13029 / OCM 148 / SB).